A 724-amino-acid chain; its full sequence is MPRNSGAGYGCPHGDPSMLDSRETPQESRQDMTVGTTQEKLKTSSLTDRQPLSKESLNHALKLSVPEKVNNAQWDAPEEALWTTRADGRVRLRIDPSCPQLPYTVHRMFYEALDKYGDFSALGFKCQDKWEHISYSQYYLLARRAAKGFLKLGLERAHSVAILGFNSPEWFFSAVGTVFAGGIVTGIYTTSSPEACQYIAYDCCANVIMVDTQKQLEKILKVWKQLPHLKAVVIYKEPPPNKMANVYTMEEFMELGNEVPEEALDAIIDTQQPNQCCVLVYTSGTTGNPKGVMLSQDNITWTARYGSQAGDIRPAEVQQEVVVSYLPLSHIAAQIYDLWTGIQWGAQVCFAEPDALKGSLVNTLREVEPTSHMGVPRVWEKIMERIQEVAAQSGFIRRKMLLWAMSVTLEQNLTCPGSDLKPFTTRLADYLVLAKVRQALGFAKCQKNFYGAAPMTAETQHFFLGLNIRLYAGYGLSETSGPHFMSSPCNYRLYSSGKLVPGCRVKLVNQDTEGIGEICLWGRTIFMGYLNMEDKTCEAIDEEGWLHTGDAGRLDADGFLYITGRLKELIITAGGENVPPVPIEEAVKMELPIISNAMLIGTDQRKFLSMLLTLKCTLDPDTSDPTDNLTEQAVEFCQRVGSRATTVSEIVGKDEAVYQAIEEGIRRVNMNAAARPYHIQKWAILERDFSISGGELGPTMKLKRLTVLEKYKDIIDSFYREQKM.

Positions 1–51 (MPRNSGAGYGCPHGDPSMLDSRETPQESRQDMTVGTTQEKLKTSSLTDRQP) are disordered. Residues 20–30 (DSRETPQESRQ) are compositionally biased toward basic and acidic residues. Residues 31-51 (DMTVGTTQEKLKTSSLTDRQP) are compositionally biased toward polar residues. Phosphoserine is present on residues Ser53 and Ser56. ATP is bound by residues 282–290 (TSGTTGNPK), 472–477 (AGYGLS), Asp550, and Arg565. Position 658 is a phosphotyrosine (Tyr658). Position 701 (Lys701) interacts with ATP.

This sequence belongs to the ATP-dependent AMP-binding enzyme family. Bubblegum subfamily.

Its subcellular location is the cytoplasm. It is found in the cytoplasmic vesicle. The protein resides in the microsome. The protein localises to the endoplasmic reticulum. It localises to the cell membrane. The enzyme catalyses a long-chain fatty acid + ATP + CoA = a long-chain fatty acyl-CoA + AMP + diphosphate. It carries out the reaction (E)-hexadec-2-enoate + ATP + CoA = (2E)-hexadecenoyl-CoA + AMP + diphosphate. It catalyses the reaction hexadecanoate + ATP + CoA = hexadecanoyl-CoA + AMP + diphosphate. Catalyzes the conversion of fatty acids such as long-chain and very long-chain fatty acids to their active form acyl-CoAs for both synthesis of cellular lipids, and degradation via beta-oxidation. Can activate diverse saturated, monosaturated and polyunsaturated fatty acids. This chain is Long-chain-fatty-acid--CoA ligase ACSBG1, found in Macaca fascicularis (Crab-eating macaque).